A 479-amino-acid polypeptide reads, in one-letter code: Aspartyl/glutamyl-tRNA(Asn/Gln) amidotransferase subunit B (479 aa).

It belongs to the GatB/GatE family. GatB subfamily. As to quaternary structure, heterotrimer of A, B and C subunits.

It carries out the reaction L-glutamyl-tRNA(Gln) + L-glutamine + ATP + H2O = L-glutaminyl-tRNA(Gln) + L-glutamate + ADP + phosphate + H(+). The enzyme catalyses L-aspartyl-tRNA(Asn) + L-glutamine + ATP + H2O = L-asparaginyl-tRNA(Asn) + L-glutamate + ADP + phosphate + 2 H(+). Its function is as follows. Allows the formation of correctly charged Asn-tRNA(Asn) or Gln-tRNA(Gln) through the transamidation of misacylated Asp-tRNA(Asn) or Glu-tRNA(Gln) in organisms which lack either or both of asparaginyl-tRNA or glutaminyl-tRNA synthetases. The reaction takes place in the presence of glutamine and ATP through an activated phospho-Asp-tRNA(Asn) or phospho-Glu-tRNA(Gln). This is Aspartyl/glutamyl-tRNA(Asn/Gln) amidotransferase subunit B from Streptococcus pyogenes serotype M4 (strain MGAS10750).